The following is a 158-amino-acid chain: Cyclic pyranopterin monophosphate synthase (158 aa).

Residues 73–75 (LCH) and 110–111 (ME) each bind substrate. D125 is an active-site residue.

It belongs to the MoaC family. In terms of assembly, homohexamer; trimer of dimers.

The enzyme catalyses (8S)-3',8-cyclo-7,8-dihydroguanosine 5'-triphosphate = cyclic pyranopterin phosphate + diphosphate. It participates in cofactor biosynthesis; molybdopterin biosynthesis. Its function is as follows. Catalyzes the conversion of (8S)-3',8-cyclo-7,8-dihydroguanosine 5'-triphosphate to cyclic pyranopterin monophosphate (cPMP). The sequence is that of Cyclic pyranopterin monophosphate synthase from Ectopseudomonas mendocina (strain ymp) (Pseudomonas mendocina).